A 148-amino-acid polypeptide reads, in one-letter code: Putative pre-16S rRNA nuclease (148 aa).

This sequence belongs to the YqgF nuclease family.

It localises to the cytoplasm. Could be a nuclease involved in processing of the 5'-end of pre-16S rRNA. This Chromohalobacter salexigens (strain ATCC BAA-138 / DSM 3043 / CIP 106854 / NCIMB 13768 / 1H11) protein is Putative pre-16S rRNA nuclease.